A 274-amino-acid polypeptide reads, in one-letter code: 3-methyl-2-oxobutanoate hydroxymethyltransferase (274 aa).

Mg(2+)-binding residues include D49 and D88. 3-methyl-2-oxobutanoate-binding positions include 49-50 (DS), D88, and K118. E120 is a Mg(2+) binding site. E187 acts as the Proton acceptor in catalysis.

The protein belongs to the PanB family. As to quaternary structure, homodecamer; pentamer of dimers. It depends on Mg(2+) as a cofactor.

The protein resides in the cytoplasm. It carries out the reaction 3-methyl-2-oxobutanoate + (6R)-5,10-methylene-5,6,7,8-tetrahydrofolate + H2O = 2-dehydropantoate + (6S)-5,6,7,8-tetrahydrofolate. It functions in the pathway cofactor biosynthesis; (R)-pantothenate biosynthesis; (R)-pantoate from 3-methyl-2-oxobutanoate: step 1/2. Its function is as follows. Catalyzes the reversible reaction in which hydroxymethyl group from 5,10-methylenetetrahydrofolate is transferred onto alpha-ketoisovalerate to form ketopantoate. The polypeptide is 3-methyl-2-oxobutanoate hydroxymethyltransferase (Rhodopseudomonas palustris (strain BisB18)).